The following is a 437-amino-acid chain: Vacuolar protein sorting-associated protein 4A (437 aa).

An interaction with CHMP1B region spans residues 1 to 84 (MTTSTLQKAI…RSKEKHGKKP (84 aa)). The region spanning 2-80 (TTSTLQKAID…KDYLRSKEKH (79 aa)) is the MIT domain. The residue at position 8 (K8) is an N6-acetyllysine. A disordered region spans residues 75-106 (RSKEKHGKKPVKENQSEGKGSDSDSEGDNPEK). Positions 84–96 (PVKENQSEGKGSD) are enriched in basic and acidic residues. 2 positions are modified to phosphoserine: S95 and S97. An ATP-binding site is contributed by 167–174 (GPPGTGKS).

The protein belongs to the AAA ATPase family. As to quaternary structure, proposed to be monomeric or homodimeric in nucleotide-free form and to oligomerize upon binding to ATP to form two stacked hexameric or heptameric rings with a central pore through which ESCRT-III substrates are translocated in an ATP-dependent manner. Interacts with CHMP1A, CHMP1B, CHMP2A, CHMP2B, CHMP3, CHMP4A, CHMP4B, CHMP4C and CHMP6. Interacts with VPS4B; the interaction suggests a heteromeric assembly with VPS4B. Interacts with SPAST. Interacts with IST1. Interacts with ZFYVE19/ANCHR; leading to retain it at midbody. Ubiquitously expressed.

It localises to the late endosome membrane. The protein localises to the midbody. The protein resides in the cytoplasm. Its subcellular location is the cytoskeleton. It is found in the spindle. It carries out the reaction ATP + H2O = ADP + phosphate + H(+). In terms of biological role, involved in late steps of the endosomal multivesicular bodies (MVB) pathway. Recognizes membrane-associated ESCRT-III assemblies and catalyzes their disassembly, possibly in combination with membrane fission. Redistributes the ESCRT-III components to the cytoplasm for further rounds of MVB sorting. MVBs contain intraluminal vesicles (ILVs) that are generated by invagination and scission from the limiting membrane of the endosome and mostly are delivered to lysosomes enabling degradation of membrane proteins, such as stimulated growth factor receptors, lysosomal enzymes and lipids. It is required for proper accomplishment of various processes including the regulation of endosome size, primary cilium organization, mitotic spindle organization, chromosome segregation, and nuclear envelope sealing and spindle disassembly during anaphase. Involved in cytokinesis: retained at the midbody by ZFYVE19/ANCHR and CHMP4C until abscission checkpoint signaling is terminated at late cytokinesis. It is then released following dephosphorylation of CHMP4C, leading to abscission. VPS4A/B are required for the exosomal release of SDCBP, CD63 and syndecan. Critical for normal erythroblast cytokinesis and correct erythropoiesis. (Microbial infection) In conjunction with the ESCRT machinery also appears to function in topologically equivalent membrane fission events, such as the terminal stages of cytokinesis and enveloped virus budding (HIV-1 and other lentiviruses). In Homo sapiens (Human), this protein is Vacuolar protein sorting-associated protein 4A.